The chain runs to 119 residues: Large ribosomal subunit protein bL20c (119 aa).

The protein belongs to the bacterial ribosomal protein bL20 family.

Its subcellular location is the plastid. The protein localises to the chloroplast. Binds directly to 23S ribosomal RNA and is necessary for the in vitro assembly process of the 50S ribosomal subunit. It is not involved in the protein synthesizing functions of that subunit. The sequence is that of Large ribosomal subunit protein bL20c from Brachypodium distachyon (Purple false brome).